Consider the following 333-residue polypeptide: Ketol-acid reductoisomerase (NADP(+)) (333 aa).

One can recognise a KARI N-terminal Rossmann domain in the interval Met1 to Thr179. NADP(+) is bound by residues Tyr22–Gln25, Lys45, Ser48, Ser50, and Asp80–Gln83. The active site involves His105. An NADP(+)-binding site is contributed by Gly131. In terms of domain architecture, KARI C-terminal knotted spans Thr180 to Val325. The Mg(2+) site is built by Asp188, Glu192, Glu224, and Glu228. Ser249 is a substrate binding site.

This sequence belongs to the ketol-acid reductoisomerase family. Requires Mg(2+) as cofactor.

The enzyme catalyses (2R)-2,3-dihydroxy-3-methylbutanoate + NADP(+) = (2S)-2-acetolactate + NADPH + H(+). It catalyses the reaction (2R,3R)-2,3-dihydroxy-3-methylpentanoate + NADP(+) = (S)-2-ethyl-2-hydroxy-3-oxobutanoate + NADPH + H(+). Its pathway is amino-acid biosynthesis; L-isoleucine biosynthesis; L-isoleucine from 2-oxobutanoate: step 2/4. It participates in amino-acid biosynthesis; L-valine biosynthesis; L-valine from pyruvate: step 2/4. In terms of biological role, involved in the biosynthesis of branched-chain amino acids (BCAA). Catalyzes an alkyl-migration followed by a ketol-acid reduction of (S)-2-acetolactate (S2AL) to yield (R)-2,3-dihydroxy-isovalerate. In the isomerase reaction, S2AL is rearranged via a Mg-dependent methyl migration to produce 3-hydroxy-3-methyl-2-ketobutyrate (HMKB). In the reductase reaction, this 2-ketoacid undergoes a metal-dependent reduction by NADPH to yield (R)-2,3-dihydroxy-isovalerate. This is Ketol-acid reductoisomerase (NADP(+)) from Mycobacterium avium (strain 104).